The chain runs to 263 residues: MTHQQPFIAVIPARLASTRLPNKPLADLGGKPMVVRVAERAREAGAQQVLVASDAQSVLDAARDHGFEAVLTRADHPSGTDRLAEVAATFGWSDDTVVVNVQGDEPLIDPMLVRDVASHLAAHPDCAIATAAHPIHDAADVFNPNVVKVALDARNVAMYFSRAPIPWSRDAYLPHWPDVATMPPPAFPVHRHIGLYAYRARFLRTYPSLAQAPVEQAEQLEQLRAMWHGERIAVLITEHAPEAGIDTPADLARVQALFRPGSK.

Belongs to the KdsB family.

The protein resides in the cytoplasm. The enzyme catalyses 3-deoxy-alpha-D-manno-oct-2-ulosonate + CTP = CMP-3-deoxy-beta-D-manno-octulosonate + diphosphate. It participates in nucleotide-sugar biosynthesis; CMP-3-deoxy-D-manno-octulosonate biosynthesis; CMP-3-deoxy-D-manno-octulosonate from 3-deoxy-D-manno-octulosonate and CTP: step 1/1. Its pathway is bacterial outer membrane biogenesis; lipopolysaccharide biosynthesis. Its function is as follows. Activates KDO (a required 8-carbon sugar) for incorporation into bacterial lipopolysaccharide in Gram-negative bacteria. This chain is 3-deoxy-manno-octulosonate cytidylyltransferase 1, found in Burkholderia ambifaria (strain MC40-6).